The following is a 130-amino-acid chain: Putative F-box protein At1g77880 (130 aa).

One can recognise an F-box domain in the interval 18 to 64 (KVSIPYLPDDLLLNCLARISRLYYPTLSLVSKRFRSLLASTELYETR).

This is Putative F-box protein At1g77880 from Arabidopsis thaliana (Mouse-ear cress).